Here is a 201-residue protein sequence, read N- to C-terminus: Probable chemoreceptor glutamine deamidase CheD 2 (201 aa).

Belongs to the CheD family.

It catalyses the reaction L-glutaminyl-[protein] + H2O = L-glutamyl-[protein] + NH4(+). Functionally, probably deamidates glutamine residues to glutamate on methyl-accepting chemotaxis receptors (MCPs), playing an important role in chemotaxis. The chain is Probable chemoreceptor glutamine deamidase CheD 2 from Chromobacterium violaceum (strain ATCC 12472 / DSM 30191 / JCM 1249 / CCUG 213 / NBRC 12614 / NCIMB 9131 / NCTC 9757 / MK).